We begin with the raw amino-acid sequence, 68 residues long: Bacteriocin lactococcin-B (68 aa).

The propeptide occupies 1–21 (MKNQLNFNIVSDEELAEVNGG).

It is found in the secreted. In terms of biological role, kills Lactococci by dissipating the membrane potential of the cells. The polypeptide is Bacteriocin lactococcin-B (lcnB) (Lactococcus lactis subsp. cremoris (Streptococcus cremoris)).